The following is a 251-amino-acid chain: Probable transcriptional regulatory protein cbdbA400 (251 aa).

Belongs to the TACO1 family.

The protein resides in the cytoplasm. This Dehalococcoides mccartyi (strain CBDB1) protein is Probable transcriptional regulatory protein cbdbA400.